Here is a 110-residue protein sequence, read N- to C-terminus: Thiosulfate sulfurtransferase GlpE (110 aa).

In terms of domain architecture, Rhodanese spans Arg17 to Ser105. Catalysis depends on Cys65, which acts as the Cysteine persulfide intermediate.

The protein belongs to the GlpE family.

The protein localises to the cytoplasm. The enzyme catalyses thiosulfate + hydrogen cyanide = thiocyanate + sulfite + 2 H(+). The catalysed reaction is thiosulfate + [thioredoxin]-dithiol = [thioredoxin]-disulfide + hydrogen sulfide + sulfite + 2 H(+). In terms of biological role, transferase that catalyzes the transfer of sulfur from thiosulfate to thiophilic acceptors such as cyanide or dithiols. May function in a CysM-independent thiosulfate assimilation pathway by catalyzing the conversion of thiosulfate to sulfite, which can then be used for L-cysteine biosynthesis. The chain is Thiosulfate sulfurtransferase GlpE from Pseudomonas aeruginosa (strain LESB58).